A 424-amino-acid polypeptide reads, in one-letter code: uncharacterized protein (424 aa).

This is an uncharacterized protein from Orgyia pseudotsugata (Douglas-fir tussock moth).